A 363-amino-acid polypeptide reads, in one-letter code: Spermatogenesis-associated protein 22 (363 aa).

Composition is skewed to polar residues over residues 1–12 (MKRSLNENSARS) and 145–157 (SCPM…QQKQ). 2 disordered regions span residues 1–51 (MKRS…DNYD) and 145–169 (SCPM…LPRN).

As to quaternary structure, component of a multiprotein complex with MEIOB and RPA2. Interacts with MEIOB. Interacts with the complex BRME1:HSF2BP:BRCA2. Expressed in testis.

The protein localises to the chromosome. In terms of biological role, meiosis-specific protein required for homologous recombination in meiosis I. The chain is Spermatogenesis-associated protein 22 (SPATA22) from Macaca fascicularis (Crab-eating macaque).